We begin with the raw amino-acid sequence, 241 residues long: Dolichol-phosphate mannosyltransferase subunit 1 (241 aa).

GDP-alpha-D-mannose-binding residues include Pro13, Tyr15, Glu17, Ile44, Asp46, Asp99, Ala100, Asp101, Arg128, Arg215, and Lys221. Asp101 is a Mg(2+) binding site. Residue Asp101 coordinates Mn(2+).

This sequence belongs to the glycosyltransferase 2 family. Mg(2+) serves as cofactor. It depends on Mn(2+) as a cofactor. Ca(2+) is required as a cofactor.

It localises to the endoplasmic reticulum. It catalyses the reaction a di-trans,poly-cis-dolichyl phosphate + GDP-alpha-D-mannose = a di-trans,poly-cis-dolichyl beta-D-mannosyl phosphate + GDP. The protein operates within protein modification; protein glycosylation. Functionally, transfers mannose from GDP-mannose to dolichol monophosphate to form dolichol phosphate mannose (Dol-P-Man) which is the mannosyl donor in pathways leading to N-glycosylation, glycosyl phosphatidylinositol membrane anchoring, and O-mannosylation of proteins. The protein is Dolichol-phosphate mannosyltransferase subunit 1 of Drosophila melanogaster (Fruit fly).